A 671-amino-acid chain; its full sequence is Autophagy-related protein 22-2 (671 aa).

Polar residues-rich tracts occupy residues Met1–Gln10 and Pro19–Phe34. Residues Met1 to Glu67 are disordered. 2 N-linked (GlcNAc...) asparagine glycosylation sites follow: Asn5 and Asn21. The span at Glu39–Val60 shows a compositional bias: basic and acidic residues. The next 4 membrane-spanning stretches (helical) occupy residues Tyr83 to Leu103, Ser155 to Ile175, Leu188 to Pro208, and Leu212 to Leu232. Residues Pro251 to Leu271 form a disordered region. The helical transmembrane segment at Ile324–Leu344 threads the bilayer. N-linked (GlcNAc...) asparagine glycosylation is present at Asn346. The next 7 membrane-spanning stretches (helical) occupy residues Leu354 to Leu374, Phe422 to Val442, Gly457 to Ile477, Ala491 to Val511, Trp523 to Cys543, Tyr560 to Val582, and Ala591 to Val611. The disordered stretch occupies residues Glu634–Ile671.

It belongs to the ATG22 family.

It is found in the vacuole membrane. Vacuolar effluxer which mediate the efflux of amino acids resulting from autophagic degradation. The release of autophagic amino acids allows the maintenance of protein synthesis and viability during nitrogen starvation. This is Autophagy-related protein 22-2 (atg22-2) from Sclerotinia sclerotiorum (strain ATCC 18683 / 1980 / Ss-1) (White mold).